Consider the following 338-residue polypeptide: Glycerol-3-phosphate dehydrogenase [NAD(P)+] (338 aa).

NADPH is bound by residues S15, Y16, H36, and K110. The sn-glycerol 3-phosphate site is built by K110, G139, and T141. A143 contributes to the NADPH binding site. Sn-glycerol 3-phosphate contacts are provided by K195, D248, S258, R259, and N260. The Proton acceptor role is filled by K195. Position 259 (R259) interacts with NADPH. NADPH-binding residues include V283 and E285.

This sequence belongs to the NAD-dependent glycerol-3-phosphate dehydrogenase family.

Its subcellular location is the cytoplasm. It carries out the reaction sn-glycerol 3-phosphate + NAD(+) = dihydroxyacetone phosphate + NADH + H(+). The enzyme catalyses sn-glycerol 3-phosphate + NADP(+) = dihydroxyacetone phosphate + NADPH + H(+). The protein operates within membrane lipid metabolism; glycerophospholipid metabolism. Functionally, catalyzes the reduction of the glycolytic intermediate dihydroxyacetone phosphate (DHAP) to sn-glycerol 3-phosphate (G3P), the key precursor for phospholipid synthesis. In Edwardsiella ictaluri (strain 93-146), this protein is Glycerol-3-phosphate dehydrogenase [NAD(P)+].